The sequence spans 510 residues: Propionyl-CoA carboxylase beta chain (510 aa).

The region spanning 1-257 (MKDILQELEN…SNRTPAPVRP (257 aa)) is the CoA carboxyltransferase N-terminal domain. The carboxyltransferase stretch occupies residues 1–504 (MKDILQELEN…NKKLANPWKK (504 aa)). One can recognise a CoA carboxyltransferase C-terminal domain in the interval 264-504 (RIEDSLDTLI…NKKLANPWKK (241 aa)).

It belongs to the AccD/PCCB family. Probably a dodecamer composed of six biotin-containing alpha subunits and six beta subunits.

The enzyme catalyses propanoyl-CoA + hydrogencarbonate + ATP = (S)-methylmalonyl-CoA + ADP + phosphate + H(+). It participates in metabolic intermediate metabolism; propanoyl-CoA degradation; succinyl-CoA from propanoyl-CoA: step 1/3. The chain is Propionyl-CoA carboxylase beta chain from Cereibacter sphaeroides (strain ATCC 17023 / DSM 158 / JCM 6121 / CCUG 31486 / LMG 2827 / NBRC 12203 / NCIMB 8253 / ATH 2.4.1.) (Rhodobacter sphaeroides).